The primary structure comprises 194 residues: ATP-dependent Clp protease proteolytic subunit (194 aa).

The active-site Nucleophile is the S97. H122 is a catalytic residue.

Belongs to the peptidase S14 family. Fourteen ClpP subunits assemble into 2 heptameric rings which stack back to back to give a disk-like structure with a central cavity, resembling the structure of eukaryotic proteasomes.

It localises to the cytoplasm. It catalyses the reaction Hydrolysis of proteins to small peptides in the presence of ATP and magnesium. alpha-casein is the usual test substrate. In the absence of ATP, only oligopeptides shorter than five residues are hydrolyzed (such as succinyl-Leu-Tyr-|-NHMec, and Leu-Tyr-Leu-|-Tyr-Trp, in which cleavage of the -Tyr-|-Leu- and -Tyr-|-Trp bonds also occurs).. In terms of biological role, cleaves peptides in various proteins in a process that requires ATP hydrolysis. Has a chymotrypsin-like activity. Plays a major role in the degradation of misfolded proteins. In Campylobacter jejuni subsp. jejuni serotype O:23/36 (strain 81-176), this protein is ATP-dependent Clp protease proteolytic subunit.